The chain runs to 375 residues: Protein RecA (375 aa).

88–95 (GPESSGKT) provides a ligand contact to ATP.

This sequence belongs to the RecA family.

The protein resides in the cytoplasm. Its function is as follows. Can catalyze the hydrolysis of ATP in the presence of single-stranded DNA, the ATP-dependent uptake of single-stranded DNA by duplex DNA, and the ATP-dependent hybridization of homologous single-stranded DNAs. It interacts with LexA causing its activation and leading to its autocatalytic cleavage. The sequence is that of Protein RecA from Rhodopirellula baltica (strain DSM 10527 / NCIMB 13988 / SH1).